The primary structure comprises 90 residues: Small ribosomal subunit protein bS16 (90 aa).

This sequence belongs to the bacterial ribosomal protein bS16 family.

This is Small ribosomal subunit protein bS16 from Lactobacillus acidophilus (strain ATCC 700396 / NCK56 / N2 / NCFM).